Here is a 53-residue protein sequence, read N- to C-terminus: Small polypeptide DEVIL 16 (53 aa).

Asn6 is a glycosylation site (N-linked (GlcNAc...) asparagine). The required for DVL/RTFL small polypeptide activity stretch occupies residues 14–45; the sequence is TFGQKCSHVVKKQRAKFYILRRCIAMLVCWHD. A helical transmembrane segment spans residues 30-46; the sequence is FYILRRCIAMLVCWHDQ.

Belongs to the DVL/RTFL small polypeptides family. Mostly expressed in stems, flower buds, flowers and seedling shoots, to a lesser extent, in roots and young cauline leaves, but not in mature rosette leaves. Barely observed in cotyledons and leaf primordia.

The protein localises to the cell membrane. Functionally, small polypeptide acting as a regulatory molecule which coordinates cellular responses required for differentiation, growth and development, probably by restricting polar cell proliferation in lateral organs (e.g. leaves) and coordinating socket cell recruitment and differentiation at trichome sites. Regulates the positional cue and cell proliferation along the body axis. This Arabidopsis thaliana (Mouse-ear cress) protein is Small polypeptide DEVIL 16.